The following is a 111-amino-acid chain: Propane 2-monooxygenase, effector component (111 aa).

The protein belongs to the TmoD/XamoD family. In terms of assembly, the propane 2-monooxygenase multicomponent enzyme system is composed of an electron transfer component and a monooxygenase component interacting with the effector protein PrmD. The electron transfer component is composed of a reductase (PrmB), and the monooxygenase component is formed by a large subunit (PrmA) and a small subunit (PrmC).

In terms of biological role, effector component of the propane 2-monooxygenase multicomponent enzyme system which is involved in the degradation of propane via the O2-dependent hydroxylation of propane. The chain is Propane 2-monooxygenase, effector component from Gordonia sp. (strain TY-5).